The primary structure comprises 370 residues: Propane 2-monooxygenase, reductase component (370 aa).

Positions 1–14 are enriched in basic residues; that stretch reads MAPRPLRRHPPLHH. Positions 1–21 are disordered; the sequence is MAPRPLRRHPPLHHSFHESRR. Positions 28–118 constitute a 2Fe-2S ferredoxin-type domain; it reads HRINFEPVDI…DCTIELLNFD (91 aa). Residues cysteine 62, cysteine 67, cysteine 70, and cysteine 102 each coordinate [2Fe-2S] cluster. In terms of domain architecture, FAD-binding FR-type spans 128–229; that stretch reads IQDVRTRVTR…TGPYGSFTIK (102 aa).

It belongs to the TmoA/XamoA family. As to quaternary structure, the propane 2-monooxygenase multicomponent enzyme system is composed of an electron transfer component and a monooxygenase component interacting with the effector protein PrmD. The electron transfer component is composed of a reductase (PrmB), and the monooxygenase component is formed by a large subunit (PrmA) and a small subunit (PrmC). FAD serves as cofactor. It depends on [2Fe-2S] cluster as a cofactor.

In terms of biological role, reductase component of the propane 2-monooxygenase multicomponent enzyme system which is involved in the degradation of propane via the O2-dependent hydroxylation of propane. Reductase catalyzes the transfer of electrons from NADH or NADPH to monooxygenase. This Rhodococcus jostii (strain RHA1) protein is Propane 2-monooxygenase, reductase component.